We begin with the raw amino-acid sequence, 77 residues long: Fungal protease inhibitor F (77 aa).

The N-terminal stretch at 1 to 22 is a signal peptide; it reads MASKNLFVLFFIFALFAANIAA. Disulfide bonds link Cys25/Cys57, Cys36/Cys49, Cys40/Cys77, and Cys59/Cys71.

This sequence belongs to the protease inhibitor I40 family. In terms of tissue distribution, hemolymph.

It localises to the secreted. Its function is as follows. Highly specific for fungal protease and subtilisin. This chain is Fungal protease inhibitor F, found in Bombyx mori (Silk moth).